Here is an 838-residue protein sequence, read N- to C-terminus: Transforming acidic coiled-coil-containing protein 3 (838 aa).

The residue at position 2 (S2) is an N-acetylserine. A phosphoserine mark is found at S25, S39, and S71. The tract at residues 123–227 is disordered; it reads EADTDLLGDA…HGAEEECKAE (105 aa). Residues 132–164 show a composition bias toward low complexity; that stretch reads ASPAFGSGSSSESGPGALADLDCSSSSQSPGSS. Phosphoserine is present on residues S175 and S177. Residues 204–227 are compositionally biased toward basic and acidic residues; that stretch reads DPCRTESQHKAETPHGAEEECKAE. S250, S317, and S402 each carry phosphoserine. Positions 311-527 are disordered; sequence GRAMTLSPQE…LELKEESFRD (217 aa). Over residues 403 to 412 the composition is skewed to basic and acidic residues; the sequence is YHLDWDKMDD. S434 is modified (phosphoserine). Over residues 492–503 the composition is skewed to polar residues; it reads NSASTSLPTSCP. The interval 522–577 is necessary but not sufficient for spindle localization; sequence EESFRDPAEVLGTGAEVDYLEQFGTSSFKESALRKQSLYLKFDPLLRDSPGRPVPV. S558 carries the phosphoserine; by AURKA modification. The tract at residues 569–594 is disordered; sequence DSPGRPVPVATETSSMHGANETPSGR. Residues 579-591 are compositionally biased toward polar residues; it reads TETSSMHGANETP. The necessary but not sufficient for spindle localization stretch occupies residues 594-838; the sequence is RPREAKLVEF…DDLISKMEKI (245 aa). Residues 637–837 adopt a coiled-coil conformation; sequence LQYSQKDLDA…CDDLISKMEK (201 aa).

It belongs to the TACC family. Interacts with microtubules. Interacts with CKAP5 independently of clathrin. Interacts with CKAP5 and clathrin forming the TACC3/ch-TOG/clathrin complex located at spindle inter-microtubules bridges; TACC3 (phosphorylated at Ser-558 by AURKA) and CLTC are proposed to form a composite microtubule interaction surface. Interacts with CCDC100/CEP120. The coiled coil C-terminal region interacts with AH receptor nuclear translocator protein (ARNT) and ARNT2. Interacts with GCN5L2 and PCAF.

It is found in the cytoplasm. The protein resides in the cytoskeleton. Its subcellular location is the microtubule organizing center. The protein localises to the centrosome. It localises to the spindle. It is found in the spindle pole. Functionally, plays a role in the microtubule-dependent coupling of the nucleus and the centrosome. Involved in the processes that regulate centrosome-mediated interkinetic nuclear migration (INM) of neural progenitors. Acts as a component of the TACC3/ch-TOG/clathrin complex proposed to contribute to stabilization of kinetochore fibers of the mitotic spindle by acting as inter-microtubule bridge. The TACC3/ch-TOG/clathrin complex is required for the maintenance of kinetochore fiber tension. May be involved in the control of cell growth and differentiation. May contribute to cancer. The protein is Transforming acidic coiled-coil-containing protein 3 (TACC3) of Homo sapiens (Human).